The primary structure comprises 200 residues: BmK-YA precursor (200 aa).

The first 23 residues, 1-23, serve as a signal peptide directing secretion; it reads MIFHQFYSILILCLIFPNQVVQS. Positions 24-34 are excised as a propeptide; that stretch reads DKERQDWIPSD. Residues 30-200 are disordered; that stretch reads WIPSDYGGYM…GYMNPAGRSD (171 aa). Residue Ala-42 is modified to Alanine amide. Positions 45–100 are excised as a propeptide; it reads SDEERQDWIPSDYGGHMNPAGRSDEERQDWIPSDYGGHMNPAGRSNEERQDWIPSD. Residue Ala-108 is modified to Alanine amide. A propeptide spanning residues 111-144 is cleaved from the precursor; the sequence is SDEERQDWIPSDYGGHMNPAGRSNEERQDWIPSD. Ala-152 carries the alanine amide modification. The propeptide occupies 155-188; it reads SDEERQDWIPSDYGGHMNPAGRSDEERQDWIPSD. Position 196 is an alanine amide (Ala-196). Positions 199 to 200 are excised as a propeptide; that stretch reads SD.

As to expression, venom gland.

The protein localises to the secreted. In terms of biological role, synthetic BmK-YA activates human opioid receptors in vitro, with highest activity on the delta-type/OPRD1 receptor (EC(50)=2.5 uM) and lower activity on mu-type/OPRM1 and kappa-type/OPRK1 receptors (EC(50)=17 uM and 30 uM, respectively). The sequence is that of BmK-YA precursor from Olivierus martensii (Manchurian scorpion).